We begin with the raw amino-acid sequence, 80 residues long: RNA-binding protein Hfq (80 aa).

The Sm domain maps to 10–69 (DPFLNVLRKEHIPVSIYLVNGIKLQGHIDSFDQYVVLLRNSVTQMVYKHAISTIVPGKAV).

The protein belongs to the Hfq family. In terms of assembly, homohexamer.

In terms of biological role, RNA chaperone that binds small regulatory RNA (sRNAs) and mRNAs to facilitate mRNA translational regulation in response to envelope stress, environmental stress and changes in metabolite concentrations. Also binds with high specificity to tRNAs. The sequence is that of RNA-binding protein Hfq from Nitrosomonas eutropha (strain DSM 101675 / C91 / Nm57).